The following is a 791-amino-acid chain: DNA repair and recombination protein RAD54-like (791 aa).

Positions 1 to 20 (MRRSLAPSQRIGQSTASRNA) are enriched in polar residues. The segment at 1-53 (MRRSLAPSQRIGQSTASRNAFTPPLLQKKNKRACQKDLRLDTDADEDKERKRF) is disordered. The required for chromatin remodeling, strand pairing activities and coupling of ATPase activity stretch occupies residues 2 to 9 (RRSLAPSQ). Thr-22 carries the post-translational modification Phosphothreonine. Residues 34–53 (CQKDLRLDTDADEDKERKRF) show a composition bias toward basic and acidic residues. A Helicase ATP-binding domain is found at 175-349 (EGKKGDFNGC…FSLVNFVNPE (175 aa)). Residue 188 to 195 (DEMGLGKT) coordinates ATP. The short motif at 300 to 303 (DEGH) is the DEGH box element. The region spanning 506–663 (LLDFMLAAIR…NNESSEKHFT (158 aa)) is the Helicase C-terminal domain. Residues 747-791 (KEVVESPESAAAEAESVEEESQPTQRKRPSPPLSDDSADEDFIGF) are disordered. The span at 782–791 (DSADEDFIGF) shows a compositional bias: acidic residues.

The protein belongs to the SNF2/RAD54 helicase family. In terms of assembly, interacts (via N-terminus) with spn-A/Rad51.

The protein resides in the nucleus. Functionally, involved in mitotic DNA repair and meiotic recombination. Functions in the recombinational DNA repair pathway. Essential for interhomolog gene conversion (GC), but may have a less important role in intersister GC than spn-A/Rad51. In the presence of DNA, spn-A/Rad51 enhances the ATPase activity of okr/Rad54. The chain is DNA repair and recombination protein RAD54-like from Drosophila ananassae (Fruit fly).